The chain runs to 425 residues: Dihydroorotase (425 aa).

2 residues coordinate Zn(2+): H56 and H58. Substrate-binding positions include 58–60 and N90; that span reads HYR. Residues D148, H175, and H228 each contribute to the Zn(2+) site. Residue N274 coordinates substrate. D301 serves as a coordination point for Zn(2+). D301 is an active-site residue. Substrate contacts are provided by residues H305 and 319 to 320; that span reads FG.

The protein belongs to the metallo-dependent hydrolases superfamily. DHOase family. Class I DHOase subfamily. Zn(2+) is required as a cofactor.

The catalysed reaction is (S)-dihydroorotate + H2O = N-carbamoyl-L-aspartate + H(+). It functions in the pathway pyrimidine metabolism; UMP biosynthesis via de novo pathway; (S)-dihydroorotate from bicarbonate: step 3/3. Functionally, catalyzes the reversible cyclization of carbamoyl aspartate to dihydroorotate. In Lactobacillus gasseri (strain ATCC 33323 / DSM 20243 / BCRC 14619 / CIP 102991 / JCM 1131 / KCTC 3163 / NCIMB 11718 / NCTC 13722 / AM63), this protein is Dihydroorotase.